The sequence spans 186 residues: Ribosome-recycling factor (186 aa).

It belongs to the RRF family.

The protein resides in the cytoplasm. Responsible for the release of ribosomes from messenger RNA at the termination of protein biosynthesis. May increase the efficiency of translation by recycling ribosomes from one round of translation to another. In Rickettsia typhi (strain ATCC VR-144 / Wilmington), this protein is Ribosome-recycling factor.